Here is a 145-residue protein sequence, read N- to C-terminus: Neutral phospholipase A2 homolog taipoxin beta chain 1 (145 aa).

An N-terminal signal peptide occupies residues M1–L27. Intrachain disulfides connect C38/C98, C54/C144, C56/C72, C71/C125, C78/C118, C87/C111, and C105/C116.

This sequence belongs to the phospholipase A2 family. Group I subfamily. D49 sub-subfamily. Heterotrimer of alpha, beta, and gamma chains; non-covalently linked. As to expression, expressed by the venom gland.

The protein localises to the secreted. Its function is as follows. Heterotrimer: Snake venom phospholipase A2 (PLA2) heterotrimer that acts as a potent presynaptic neurotoxin by blocking synaptic transmission and synaptic vesicle recycling. May act by binding in a calcium-dependent fashion to neurotonal pentraxin-1 (NPTX1) and neurotonal pentraxin-2 (NPTX2), but not to neuronal pentraxin receptor (NPTXR). Also binds to taipoxin-associated calcium binding protein 49 (RCN2), a protein localized in the lumen of endoplasmic reticulum. Monomer (beta chain): Snake venom phospholipase A2 homolog that is neither toxic nor enzymatically active. Does not bind calcium. The polypeptide is Neutral phospholipase A2 homolog taipoxin beta chain 1 (Oxyuranus scutellatus scutellatus (Australian taipan)).